The chain runs to 247 residues: TM2 domain-containing protein 3 (247 aa).

The first 25 residues, 1 to 25 (MIPMMTLKRVCRVLLFITQMYVLSG), serve as a signal peptide directing secretion. The Extracellular portion of the chain corresponds to 26 to 179 (RGFLSFEYSE…RTFPKMLYCN (154 aa)). Residues N87, N99, N139, N155, N169, and N179 are each glycosylated (N-linked (GlcNAc...) asparagine). Residues 180 to 200 (WTGGYKWSTALALSITLGGFG) form a helical membrane-spanning segment. A TM2 domain is found at 183–231 (GYKWSTALALSITLGGFGADRFYLGQWREGLGKLFSFGGLGIWTLIDVF). Residues 201 to 215 (ADRFYLGQWREGLGK) are Cytoplasmic-facing. A helical transmembrane segment spans residues 216 to 236 (LFSFGGLGIWTLIDVFLISVG). Residues 237–247 (YVGPADGSLYI) are Extracellular-facing.

The protein belongs to the TM2 family.

The protein localises to the membrane. This is TM2 domain-containing protein 3 (tm2d3) from Xenopus tropicalis (Western clawed frog).